The chain runs to 301 residues: Ribonuclease Z (301 aa).

Residues histidine 61, histidine 63, aspartate 65, histidine 66, histidine 140, aspartate 211, and histidine 269 each coordinate Zn(2+). The active-site Proton acceptor is the aspartate 65.

Belongs to the RNase Z family. Homodimer. The cofactor is Zn(2+).

It carries out the reaction Endonucleolytic cleavage of RNA, removing extra 3' nucleotides from tRNA precursor, generating 3' termini of tRNAs. A 3'-hydroxy group is left at the tRNA terminus and a 5'-phosphoryl group is left at the trailer molecule.. In terms of biological role, zinc phosphodiesterase, which displays some tRNA 3'-processing endonuclease activity. Probably involved in tRNA maturation, by removing a 3'-trailer from precursor tRNA. This Bradyrhizobium sp. (strain ORS 278) protein is Ribonuclease Z.